We begin with the raw amino-acid sequence, 250 residues long: S-adenosyl-L-methionine-dependent 2-deoxy-scyllo-inosamine dehydrogenase (250 aa).

[4Fe-4S] cluster is bound by residues cysteine 16, cysteine 20, cysteine 23, cysteine 169, cysteine 187, and glutamate 223.

It belongs to the radical SAM superfamily. Requires [4Fe-4S] cluster as cofactor.

It carries out the reaction 2-deoxy-scyllo-inosamine + S-adenosyl-L-methionine = 3-amino-2,3-dideoxy-scyllo-inosose + 5'-deoxyadenosine + L-methionine + H(+). Its pathway is antibiotic biosynthesis; butirosin biosynthesis. Its function is as follows. Catalyzes the radical S-adenosyl-L-methionine (SAM)-dependent two-electron oxidation of 2-deoxy-scyllo-inosamine (DOIA) to amino-dideoxy-scyllo-inosose (amino-DOI) in the biosynthetic pathway of butirosin. This Niallia circulans (Bacillus circulans) protein is S-adenosyl-L-methionine-dependent 2-deoxy-scyllo-inosamine dehydrogenase (btrN).